The sequence spans 210 residues: Putative 3-methyladenine DNA glycosylase (210 aa).

This sequence belongs to the DNA glycosylase MPG family.

The sequence is that of Putative 3-methyladenine DNA glycosylase from Corynebacterium glutamicum (strain R).